The primary structure comprises 178 residues: Small ribosomal subunit protein uS7c (178 aa).

Residues 137-146 (QKKEEIEKSK) are compositionally biased toward basic and acidic residues. Residues 137–178 (QKKEEIEKSKSPVNNNKKFISKNKKSKNKKQKKRLKRKKNIY) are disordered. Residues 155-178 (FISKNKKSKNKKQKKRLKRKKNIY) show a composition bias toward basic residues.

The protein belongs to the universal ribosomal protein uS7 family. Part of the 30S ribosomal subunit.

It localises to the plastid. Functionally, one of the primary rRNA binding proteins, it binds directly to 16S rRNA where it nucleates assembly of the head domain of the 30S subunit. The chain is Small ribosomal subunit protein uS7c (rps7) from Euglena longa (Euglenophycean alga).